The chain runs to 202 residues: dITP/XTP pyrophosphatase (202 aa).

7 to 12 (TTNEGK) serves as a coordination point for substrate. Mg(2+) is bound by residues glutamate 37 and aspartate 66. Residue aspartate 66 is the Proton acceptor of the active site. Substrate contacts are provided by residues serine 67, 155-158 (FGYD), lysine 178, and 183-184 (HR).

Belongs to the HAM1 NTPase family. In terms of assembly, homodimer. Mg(2+) is required as a cofactor.

The enzyme catalyses XTP + H2O = XMP + diphosphate + H(+). It carries out the reaction dITP + H2O = dIMP + diphosphate + H(+). The catalysed reaction is ITP + H2O = IMP + diphosphate + H(+). In terms of biological role, pyrophosphatase that catalyzes the hydrolysis of nucleoside triphosphates to their monophosphate derivatives, with a high preference for the non-canonical purine nucleotides XTP (xanthosine triphosphate), dITP (deoxyinosine triphosphate) and ITP. Seems to function as a house-cleaning enzyme that removes non-canonical purine nucleotides from the nucleotide pool, thus preventing their incorporation into DNA/RNA and avoiding chromosomal lesions. In Aquifex aeolicus (strain VF5), this protein is dITP/XTP pyrophosphatase.